The sequence spans 427 residues: Glucose-1-phosphate adenylyltransferase (427 aa).

Arg40, His46, and Arg52 together coordinate AMP. Residue Tyr114 coordinates alpha-D-glucose 1-phosphate. Arg130 is an AMP binding site. Alpha-D-glucose 1-phosphate-binding positions include Gly179, Glu194–Lys195, and Ser212. Arg386 contacts AMP.

This sequence belongs to the bacterial/plant glucose-1-phosphate adenylyltransferase family. In terms of assembly, homotetramer.

The catalysed reaction is alpha-D-glucose 1-phosphate + ATP + H(+) = ADP-alpha-D-glucose + diphosphate. It participates in glycan biosynthesis; glycogen biosynthesis. With respect to regulation, allosterically activated by fructose-1,6-bisphosphate (F16BP) and inhibited by AMP. In terms of biological role, involved in the biosynthesis of ADP-glucose, a building block required for the elongation reactions to produce glycogen. Catalyzes the reaction between ATP and alpha-D-glucose 1-phosphate (G1P) to produce pyrophosphate and ADP-Glc. The protein is Glucose-1-phosphate adenylyltransferase of Cronobacter sakazakii (strain ATCC BAA-894) (Enterobacter sakazakii).